The primary structure comprises 494 residues: Glycogen synthase (494 aa).

Lysine 15 serves as a coordination point for ADP-alpha-D-glucose.

It belongs to the glycosyltransferase 1 family. Bacterial/plant glycogen synthase subfamily.

The catalysed reaction is [(1-&gt;4)-alpha-D-glucosyl](n) + ADP-alpha-D-glucose = [(1-&gt;4)-alpha-D-glucosyl](n+1) + ADP + H(+). It functions in the pathway glycan biosynthesis; glycogen biosynthesis. Its function is as follows. Synthesizes alpha-1,4-glucan chains using ADP-glucose. This Paramagnetospirillum magneticum (strain ATCC 700264 / AMB-1) (Magnetospirillum magneticum) protein is Glycogen synthase.